Here is a 443-residue protein sequence, read N- to C-terminus: Thymidine phosphorylase (443 aa).

The protein belongs to the thymidine/pyrimidine-nucleoside phosphorylase family. Homodimer.

The enzyme catalyses thymidine + phosphate = 2-deoxy-alpha-D-ribose 1-phosphate + thymine. It functions in the pathway pyrimidine metabolism; dTMP biosynthesis via salvage pathway; dTMP from thymine: step 1/2. In terms of biological role, the enzymes which catalyze the reversible phosphorolysis of pyrimidine nucleosides are involved in the degradation of these compounds and in their utilization as carbon and energy sources, or in the rescue of pyrimidine bases for nucleotide synthesis. This chain is Thymidine phosphorylase, found in Shewanella sp. (strain ANA-3).